The primary structure comprises 1025 residues: Glycine dehydrogenase (decarboxylating), mitochondrial (1025 aa).

The transit peptide at 1–35 (MQLCARAWGLRLGRGAGGGHRLARGTGLSWAQRSR) directs the protein to the mitochondrion. The tract at residues 16–51 (AGGGHRLARGTGLSWAQRSRDSSGGGGGGGGGDRGA) is disordered. Over residues 38-50 (SGGGGGGGGGDRG) the composition is skewed to gly residues. 4 positions are modified to N6-acetyllysine: lysine 452, lysine 519, lysine 653, and lysine 669. At lysine 759 the chain carries N6-(pyridoxal phosphate)lysine.

It belongs to the GcvP family. In terms of assembly, interacts with GCSH. Homodimer. The glycine cleavage system is composed of four proteins: P (GLDC), T (GCST), L (DLD) and H (GCSH). Pyridoxal 5'-phosphate serves as cofactor.

It is found in the mitochondrion. It catalyses the reaction N(6)-[(R)-lipoyl]-L-lysyl-[glycine-cleavage complex H protein] + glycine + H(+) = N(6)-[(R)-S(8)-aminomethyldihydrolipoyl]-L-lysyl-[glycine-cleavage complex H protein] + CO2. Its activity is regulated as follows. Stimulated by lipoic acid. Inhibited in presence of methylamine. Functionally, the glycine cleavage system catalyzes the degradation of glycine. The P protein (GLDC) binds the alpha-amino group of glycine through its pyridoxal phosphate cofactor; CO(2) is released and the remaining methylamine moiety is then transferred to the lipoamide cofactor of the H protein (GCSH). The sequence is that of Glycine dehydrogenase (decarboxylating), mitochondrial from Mus musculus (Mouse).